Consider the following 218-residue polypeptide: Small ribosomal subunit protein uS3c (218 aa).

Residues 43 to 118 form the KH type-2 domain; the sequence is IKNYVQKNPR…RLNIAIARIS (76 aa).

It belongs to the universal ribosomal protein uS3 family. Part of the 30S ribosomal subunit.

Its subcellular location is the plastid. It is found in the chloroplast. This is Small ribosomal subunit protein uS3c (rps3) from Acorus calamus (Sweet flag).